Consider the following 379-residue polypeptide: Putative F-box protein At5g62660 (379 aa).

The F-box domain maps to Ala35–Val84.

This Arabidopsis thaliana (Mouse-ear cress) protein is Putative F-box protein At5g62660.